A 218-amino-acid polypeptide reads, in one-letter code: Kynurenine formamidase (218 aa).

Trp-27 contacts substrate. Positions 57, 61, and 63 each coordinate Zn(2+). The active-site Proton donor/acceptor is the His-67. Positions 169 and 181 each coordinate Zn(2+).

Belongs to the Cyclase 1 superfamily. KynB family. Homodimer. The cofactor is Zn(2+).

It catalyses the reaction N-formyl-L-kynurenine + H2O = L-kynurenine + formate + H(+). The protein operates within amino-acid degradation; L-tryptophan degradation via kynurenine pathway; L-kynurenine from L-tryptophan: step 2/2. Its activity is regulated as follows. Inhibited by EDTA. Insensitive to phenylmethylsulfonyl fluoride (PMSF). Its function is as follows. Catalyzes the hydrolysis of N-formyl-L-kynurenine to L-kynurenine, the second step in the kynurenine pathway of tryptophan degradation. This is Kynurenine formamidase from Cupriavidus metallidurans (strain ATCC 43123 / DSM 2839 / NBRC 102507 / CH34) (Ralstonia metallidurans).